The chain runs to 161 residues: Putative pre-16S rRNA nuclease (161 aa).

The tract at residues 142 to 161 (AGSPPGALVPRNRVDPDRHA) is disordered.

This sequence belongs to the YqgF nuclease family.

Its subcellular location is the cytoplasm. Its function is as follows. Could be a nuclease involved in processing of the 5'-end of pre-16S rRNA. The chain is Putative pre-16S rRNA nuclease from Clavibacter sepedonicus (Clavibacter michiganensis subsp. sepedonicus).